A 562-amino-acid polypeptide reads, in one-letter code: Phosphoenolpyruvate carboxykinase (ATP) (562 aa).

Residue 265–272 (GLSGTGKT) coordinates ATP.

It belongs to the phosphoenolpyruvate carboxykinase (ATP) family.

It catalyses the reaction oxaloacetate + ATP = phosphoenolpyruvate + ADP + CO2. The protein operates within carbohydrate biosynthesis; gluconeogenesis. The sequence is that of Phosphoenolpyruvate carboxykinase (ATP) (pckA) from Dictyostelium discoideum (Social amoeba).